Here is a 193-residue protein sequence, read N- to C-terminus: Protein GrpE (193 aa).

A compositionally biased stretch (basic and acidic residues) spans 1 to 22; sequence MDPKEKEKMAEELNVEETKDTA. Residues 1–45 form a disordered region; sequence MDPKEKEKMAEELNVEETKDTAEEQPQDDQAEEAAPLTHEEQLEK. Residues 23 to 32 are compositionally biased toward acidic residues; sequence EEQPQDDQAE.

This sequence belongs to the GrpE family. Homodimer.

It localises to the cytoplasm. Participates actively in the response to hyperosmotic and heat shock by preventing the aggregation of stress-denatured proteins, in association with DnaK and GrpE. It is the nucleotide exchange factor for DnaK and may function as a thermosensor. Unfolded proteins bind initially to DnaJ; upon interaction with the DnaJ-bound protein, DnaK hydrolyzes its bound ATP, resulting in the formation of a stable complex. GrpE releases ADP from DnaK; ATP binding to DnaK triggers the release of the substrate protein, thus completing the reaction cycle. Several rounds of ATP-dependent interactions between DnaJ, DnaK and GrpE are required for fully efficient folding. This is Protein GrpE from Bacteroides thetaiotaomicron (strain ATCC 29148 / DSM 2079 / JCM 5827 / CCUG 10774 / NCTC 10582 / VPI-5482 / E50).